Reading from the N-terminus, the 299-residue chain is Formamidopyrimidine-DNA glycosylase (299 aa).

P2 functions as the Schiff-base intermediate with DNA in the catalytic mechanism. E3 functions as the Proton donor in the catalytic mechanism. K58 functions as the Proton donor; for beta-elimination activity in the catalytic mechanism. H106, R125, and K168 together coordinate DNA. The FPG-type zinc finger occupies 259 to 295 (RVYDRVGHACPTKGCTGRVGRIVQGGRSTFFCETCQV). Residue R285 is the Proton donor; for delta-elimination activity of the active site.

This sequence belongs to the FPG family. In terms of assembly, monomer. It depends on Zn(2+) as a cofactor.

It catalyses the reaction Hydrolysis of DNA containing ring-opened 7-methylguanine residues, releasing 2,6-diamino-4-hydroxy-5-(N-methyl)formamidopyrimidine.. The enzyme catalyses 2'-deoxyribonucleotide-(2'-deoxyribose 5'-phosphate)-2'-deoxyribonucleotide-DNA = a 3'-end 2'-deoxyribonucleotide-(2,3-dehydro-2,3-deoxyribose 5'-phosphate)-DNA + a 5'-end 5'-phospho-2'-deoxyribonucleoside-DNA + H(+). Functionally, involved in base excision repair of DNA damaged by oxidation or by mutagenic agents. Acts as a DNA glycosylase that recognizes and removes damaged bases. Has a preference for oxidized purines, such as 7,8-dihydro-8-oxoguanine (8-oxoG). Has AP (apurinic/apyrimidinic) lyase activity and introduces nicks in the DNA strand. Cleaves the DNA backbone by beta-delta elimination to generate a single-strand break at the site of the removed base with both 3'- and 5'-phosphates. The chain is Formamidopyrimidine-DNA glycosylase from Methylorubrum extorquens (strain CM4 / NCIMB 13688) (Methylobacterium extorquens).